We begin with the raw amino-acid sequence, 452 residues long: Phosphoglucosamine mutase (452 aa).

Ser-103 functions as the Phosphoserine intermediate in the catalytic mechanism. Mg(2+) contacts are provided by Ser-103, Asp-243, Asp-245, and Asp-247. Residue Ser-103 is modified to Phosphoserine.

This sequence belongs to the phosphohexose mutase family. It depends on Mg(2+) as a cofactor. Activated by phosphorylation.

The enzyme catalyses alpha-D-glucosamine 1-phosphate = D-glucosamine 6-phosphate. Functionally, catalyzes the conversion of glucosamine-6-phosphate to glucosamine-1-phosphate. The protein is Phosphoglucosamine mutase of Lactobacillus acidophilus (strain ATCC 700396 / NCK56 / N2 / NCFM).